Here is a 755-residue protein sequence, read N- to C-terminus: 3-isopropylmalate dehydratase (755 aa).

The [4Fe-4S] cluster site is built by cysteine 353, cysteine 413, and cysteine 416. Disordered stretches follow at residues 427-446 (GERCASTSNRNFEGRQGAGG), 471-493 (LTPAQQDRPASPTPKKIETELEP), and 510-529 (DAPATGASPPSPAPSDAAGM). The span at 510-528 (DAPATGASPPSPAPSDAAG) shows a compositional bias: low complexity.

Belongs to the aconitase/IPM isomerase family. Monomer. Requires [4Fe-4S] cluster as cofactor.

It carries out the reaction (2R,3S)-3-isopropylmalate = (2S)-2-isopropylmalate. It functions in the pathway amino-acid biosynthesis; L-leucine biosynthesis; L-leucine from 3-methyl-2-oxobutanoate: step 2/4. Functionally, catalyzes the isomerization between 2-isopropylmalate and 3-isopropylmalate, via the formation of 2-isopropylmaleate. The polypeptide is 3-isopropylmalate dehydratase (LEUA) (Rhizomucor pusillus).